Here is a 245-residue protein sequence, read N- to C-terminus: 14-3-3 protein zeta/delta (245 aa).

At Met1 the chain carries N-acetylmethionine. Lys3 is subject to N6-acetyllysine. A Phosphoserine; by PKA modification is found at Ser58. An N6-acetyllysine modification is found at Lys68. 3 positions are modified to phosphoserine: Ser184, Ser207, and Ser210. Thr232 carries the phosphothreonine; by CK1 modification.

Belongs to the 14-3-3 family. As to quaternary structure, interacts with CDK16 and BSPRY. Interacts with WEE1 (C-terminal). Interacts with SAMSN1. Interacts with MLF1 (phosphorylated form); the interaction retains it in the cytoplasm. Interacts with Thr-phosphorylated ITGB2. Interacts with BCL2L11. Homodimer. Heterodimerizes with YWHAE. Homo- and heterodimerization is inhibited by phosphorylation on Ser-58. Interacts with FOXO4, NOXA1, SSH1 and ARHGEF2. Interacts with Pseudomonas aeruginosa exoS (unphosphorylated form). Interacts with BAX; the interaction occurs in the cytoplasm. Under stress conditions, MAPK8-mediated phosphorylation releases BAX to mitochondria. Interacts with phosphorylated RAF1; the interaction is inhibited when YWHAZ is phosphorylated on Thr-232. Interacts with TP53; the interaction enhances p53 transcriptional activity. The Ser-58 phosphorylated form inhibits this interaction and p53 transcriptional activity. Interacts with ABL1 (phosphorylated form); the interaction retains ABL1 in the cytoplasm. Interacts with PKA-phosphorylated AANAT; the interaction modulates AANAT enzymatic activity by increasing affinity for arylalkylamines and acetyl-CoA and protecting the enzyme from dephosphorylation and proteasomal degradation. It may also prevent thiol-dependent inactivation. Interacts with AKT1; the interaction phosphorylates YWHAZ and modulates dimerization. Interacts with GAB2 and TLK2. Interacts with the 'Thr-369' phosphorylated form of DAPK2. Interacts with PI4KB, TBC1D22A and TBC1D22B. Interacts with ZFP36L1 (via phosphorylated form); this interaction occurs in a p38 MAPK- and AKT-signaling pathways. Interacts with SLITRK1. Interacts with AK5, LDB1, MADD, MARK3, PDE1A and SMARCB1. Interacts with YWHAZ. Interacts with MEFV. Interacts with ADAM22 (via C-terminus). In terms of processing, the delta, brain-specific form differs from the zeta form in being phosphorylated. Phosphorylation on Ser-184 by MAPK8; promotes dissociation of BAX and translocation of BAX to mitochondria. Phosphorylation on Thr-232; inhibits binding of RAF1. Phosphorylated on Ser-58 by PKA and protein kinase C delta type catalytic subunit in a sphingosine-dependent fashion. Phosphorylation on Ser-58 by PKA; disrupts homodimerization and heterodimerization with YHAE and TP53. In terms of tissue distribution, highly expressed in brain (at protein level).

It localises to the cytoplasm. It is found in the melanosome. In terms of biological role, adapter protein implicated in the regulation of a large spectrum of both general and specialized signaling pathways. Binds to a large number of partners, usually by recognition of a phosphoserine or phosphothreonine motif. Binding generally results in the modulation of the activity of the binding partner. Promotes cytosolic retention and inactivation of TFEB transcription factor by binding to phosphorylated TFEB. Induces ARHGEF7 activity on RAC1 as well as lamellipodia and membrane ruffle formation. In neurons, regulates spine maturation through the modulation of ARHGEF7 activity. In Ovis aries (Sheep), this protein is 14-3-3 protein zeta/delta (YWHAZ).